Consider the following 129-residue polypeptide: Small ribosomal subunit protein uS11 (129 aa).

Belongs to the universal ribosomal protein uS11 family. As to quaternary structure, part of the 30S ribosomal subunit. Interacts with proteins S7 and S18. Binds to IF-3.

In terms of biological role, located on the platform of the 30S subunit, it bridges several disparate RNA helices of the 16S rRNA. Forms part of the Shine-Dalgarno cleft in the 70S ribosome. The protein is Small ribosomal subunit protein uS11 of Francisella tularensis subsp. holarctica (strain FTNF002-00 / FTA).